Consider the following 48-residue polypeptide: Delta-stichotoxin-Hcr1e (48 aa).

3 disulfides stabilise this stretch: Cys3–Cys43, Cys5–Cys33, and Cys26–Cys44.

This sequence belongs to the sea anemone sodium channel inhibitory toxin family. Type II subfamily.

Its subcellular location is the secreted. It localises to the nematocyst. In terms of biological role, binds to site 3 of voltage-gated sodium channels and inhibits the inactivation process. The polypeptide is Delta-stichotoxin-Hcr1e (Radianthus crispa (Leathery sea anemone)).